The sequence spans 392 residues: Ceramide phosphoethanolamine synthase (392 aa).

Residues M1–K10 are Lumenal-facing. A helical transmembrane segment spans residues I11–Y31. Topologically, residues L32–R140 are cytoplasmic. Residues S59–T82 show a composition bias toward low complexity. The segment at S59–Q91 is disordered. The chain crosses the membrane as a helical span at residues S141–G161. Residues K162–Y212 lie on the Lumenal side of the membrane. The helical transmembrane segment at V213–L233 threads the bilayer. Residues K234–K271 are Cytoplasmic-facing. Residues N272 to N288 traverse the membrane as a helical segment. At R289 to W319 the chain is on the lumenal side. The chain crosses the membrane as a helical span at residues F320–L340. At L341 to R356 the chain is on the cytoplasmic side. A helical transmembrane segment spans residues Y357 to A377. Topologically, residues Q378–L392 are lumenal.

It belongs to the CDP-alcohol phosphatidyltransferase class-I family. Requires Mn(2+) as cofactor.

The protein resides in the membrane. The protein localises to the golgi apparatus membrane. Its subcellular location is the cell membrane. The enzyme catalyses CDP-ethanolamine + an N-acylsphing-4-enine = an N-acylsphing-4-enine 1-phosphoethanolamine + CMP + H(+). It carries out the reaction CDP-ethanolamine + an N-acyl-sphingoid base = an N-acyl-sphingoid 1-phosphoethanolamine + CMP + H(+). Functionally, catalyzes the biosynthesis of ceramide phosphoethanolamine (CPE) through the transfer of a phosphatidyl head group from cytidine 5'-diphosphate (CDP)-ethanolamine on to the primary hydroxyl of ceramide. This Drosophila melanogaster (Fruit fly) protein is Ceramide phosphoethanolamine synthase.